We begin with the raw amino-acid sequence, 77 residues long: Major outer membrane lipoprotein Lpp (77 aa).

Positions 1 to 19 (MNRTKLVLGAVILGSHSAG) are cleaved as a signal peptide. Cys-20 carries the N-palmitoyl cysteine lipid modification. The S-diacylglycerol cysteine moiety is linked to residue Cys-20. 2 consecutive repeats follow at residues 23-33 (NAKIDQLSSDV) and 37-47 (NAKVDQLSNDV). The stretch at 26–74 (IDQLSSDVQTLNAKVDQLSNDVNAMRSDVQAAKDDAARANQRLDNQAHA) forms a coiled coil. Residues 56–77 (AAKDDAARANQRLDNQAHAYKK) form a disordered region. Position 77 is an N6-murein peptidoglycan lysine (Lys-77).

Belongs to the Lpp family. Homotrimer.

Its subcellular location is the cell outer membrane. The protein resides in the secreted. It localises to the cell wall. Its function is as follows. A highly abundant outer membrane lipoprotein that controls the distance between the inner and outer membranes. The only protein known to be covalently linked to the peptidoglycan network (PGN). Also non-covalently binds the PGN. The link between the cell outer membrane and PGN contributes to maintenance of the structural and functional integrity of the cell envelope, and maintains the correct distance between the PGN and the outer membrane. This is Major outer membrane lipoprotein Lpp from Serratia marcescens.